Here is a 345-residue protein sequence, read N- to C-terminus: Ferredoxin--NADP reductase (345 aa).

FAD contacts are provided by D38, Q46, Y51, V91, F129, D295, and T336.

It belongs to the ferredoxin--NADP reductase type 2 family. In terms of assembly, homodimer. The cofactor is FAD.

It catalyses the reaction 2 reduced [2Fe-2S]-[ferredoxin] + NADP(+) + H(+) = 2 oxidized [2Fe-2S]-[ferredoxin] + NADPH. The protein is Ferredoxin--NADP reductase of Rhodospirillum rubrum (strain ATCC 11170 / ATH 1.1.1 / DSM 467 / LMG 4362 / NCIMB 8255 / S1).